The primary structure comprises 491 residues: Phosphatidylglycerol--prolipoprotein diacylglyceryl transferase (491 aa).

3 consecutive transmembrane segments (helical) span residues 24 to 44 (IPLRAYALCIILGIVVAIWWG), 58 to 78 (VLDVAMFAVPFGLIGGRAYHV), and 98 to 118 (IWQGGLGIWGAVFLGGIGAWI). Arginine 146 contacts a 1,2-diacyl-sn-glycero-3-phospho-(1'-sn-glycerol). The next 2 helical transmembrane spans lie at 192 to 212 (IVHPTFLYELLWNVLVVIALV) and 256 to 276 (INNFTSALVFLAAIAYFVFAT). Residues 309–323 (NGPAEPGATASTATD) show a composition bias toward low complexity. The segment at 309-491 (NGPAEPGATA…DRVDSGENDA (183 aa)) is disordered. The span at 347 to 360 (KGDRGTADAADTAK) shows a compositional bias: basic and acidic residues. Composition is skewed to low complexity over residues 361–387 (DASATDSASNSASATDSDFGETAGSSD), 394–406 (AVKAASGATAAEK), and 415–438 (AGEAAADTSAADQPAADKSGSAKS). Positions 453 to 462 (NESESTRDNE) are enriched in basic and acidic residues. Residues 463–481 (STSAGTAASATGSAGAGAT) are compositionally biased toward low complexity. The segment covering 482 to 491 (DRVDSGENDA) has biased composition (basic and acidic residues).

This sequence belongs to the Lgt family.

It localises to the cell membrane. It carries out the reaction L-cysteinyl-[prolipoprotein] + a 1,2-diacyl-sn-glycero-3-phospho-(1'-sn-glycerol) = an S-1,2-diacyl-sn-glyceryl-L-cysteinyl-[prolipoprotein] + sn-glycerol 1-phosphate + H(+). It functions in the pathway protein modification; lipoprotein biosynthesis (diacylglyceryl transfer). Its function is as follows. Catalyzes the transfer of the diacylglyceryl group from phosphatidylglycerol to the sulfhydryl group of the N-terminal cysteine of a prolipoprotein, the first step in the formation of mature lipoproteins. This chain is Phosphatidylglycerol--prolipoprotein diacylglyceryl transferase, found in Nocardia farcinica (strain IFM 10152).